Consider the following 187-residue polypeptide: Shikimate kinase (187 aa).

Residue 18–23 participates in ATP binding; the sequence is GCGKST. Position 22 (S22) interacts with Mg(2+). The substrate site is built by D40, R64, and G86. ATP is bound at residue R128. Position 147 (R147) interacts with substrate. R164 contributes to the ATP binding site.

It belongs to the shikimate kinase family. As to quaternary structure, monomer. Requires Mg(2+) as cofactor.

It is found in the cytoplasm. The catalysed reaction is shikimate + ATP = 3-phosphoshikimate + ADP + H(+). It participates in metabolic intermediate biosynthesis; chorismate biosynthesis; chorismate from D-erythrose 4-phosphate and phosphoenolpyruvate: step 5/7. Catalyzes the specific phosphorylation of the 3-hydroxyl group of shikimic acid using ATP as a cosubstrate. This is Shikimate kinase from Rhodopirellula baltica (strain DSM 10527 / NCIMB 13988 / SH1).